The following is a 145-amino-acid chain: MQRITITIDDDLLETIDKISEQRGYASRSETLRDLVRDAVTREQAAVDSETKCYATLTYVYEHETRDLSRRLTTTQHHHHDLSVSTLHVHVDGHDCLEVSVLKGTVGEIKSFADSVVTQRGVRFGNLHLIPSEHGPHDHGPHSHD.

Positions 77, 88, 90, and 96 each coordinate Ni(2+).

It belongs to the transcriptional regulatory CopG/NikR family. Requires Ni(2+) as cofactor.

Its function is as follows. Transcriptional regulator. This Rhizobium rhizogenes (strain K84 / ATCC BAA-868) (Agrobacterium radiobacter) protein is Putative nickel-responsive regulator.